We begin with the raw amino-acid sequence, 266 residues long: Thymidylate synthase (266 aa).

DUMP is bound at residue Arg-24. His-54 is a (6R)-5,10-methylene-5,6,7,8-tetrahydrofolate binding site. DUMP is bound at residue 129 to 130 (RR). Cys-149 functions as the Nucleophile in the catalytic mechanism. Residues 169 to 172 (RSAD), Asn-180, and 210 to 212 (HIY) contribute to the dUMP site. Asp-172 contributes to the (6R)-5,10-methylene-5,6,7,8-tetrahydrofolate binding site. Residue Ala-265 participates in (6R)-5,10-methylene-5,6,7,8-tetrahydrofolate binding.

The protein belongs to the thymidylate synthase family. Bacterial-type ThyA subfamily. In terms of assembly, homodimer.

It localises to the cytoplasm. The catalysed reaction is dUMP + (6R)-5,10-methylene-5,6,7,8-tetrahydrofolate = 7,8-dihydrofolate + dTMP. It functions in the pathway pyrimidine metabolism; dTTP biosynthesis. Functionally, catalyzes the reductive methylation of 2'-deoxyuridine-5'-monophosphate (dUMP) to 2'-deoxythymidine-5'-monophosphate (dTMP) while utilizing 5,10-methylenetetrahydrofolate (mTHF) as the methyl donor and reductant in the reaction, yielding dihydrofolate (DHF) as a by-product. This enzymatic reaction provides an intracellular de novo source of dTMP, an essential precursor for DNA biosynthesis. The chain is Thymidylate synthase from Mycobacterium ulcerans (strain Agy99).